We begin with the raw amino-acid sequence, 530 residues long: Protein SLOW WALKER 1 (530 aa).

7 WD repeats span residues 50–89, 91–130, 133–173, 176–216, 220–258, 262–304, and 320–363; these read NLVS…SSRR, SFRD…ALRT, SHSA…VISD, GHKD…SNWI, NHGL…KMVC, SHNK…VTYS, and GSTR…DESR. The short motif at 392-399 is the Nuclear localization signal element; it reads EKKGLKLT.

Expressed in cells undergoing active cell divisions, including functional megaspores and the female gametophytic cells. Accumulates in roots, stems, leaves, inflorescences and siliques.

It localises to the nucleus. Its subcellular location is the nucleolus. Its function is as follows. Essential protein required for nuclear division and organization during embryo sac development in female gametophyte, probably by promoting rRNA biogenesis essential for the progression of the mitotic division cycles during gametogenesis. Involved in nucleolar processing of pre-18S ribosomal RNA. The chain is Protein SLOW WALKER 1 from Arabidopsis thaliana (Mouse-ear cress).